The following is a 245-amino-acid chain: rRNA adenine N-6-methyltransferase (245 aa).

Residues Asn10, Leu12, Gly37, Glu58, Asp83, and Asn100 each coordinate S-adenosyl-L-methionine.

The protein belongs to the class I-like SAM-binding methyltransferase superfamily. rRNA adenine N(6)-methyltransferase family.

The enzyme catalyses adenosine(2085) in 23S rRNA + 2 S-adenosyl-L-methionine = N(6)-dimethyladenosine(2085) in 23S rRNA + 2 S-adenosyl-L-homocysteine + 2 H(+). In terms of biological role, this protein produces a dimethylation of the adenine residue at position 2085 in 23S rRNA, resulting in reduced affinity between ribosomes and macrolide-lincosamide-streptogramin B antibiotics. The polypeptide is rRNA adenine N-6-methyltransferase (ermB) (Enterococcus faecalis (strain ATCC 700802 / V583)).